The sequence spans 538 residues: Bifunctional purine biosynthesis protein PurH (538 aa).

The MGS-like domain maps to 8–158 (IPAPDKVEIK…KNHAYVTILT (151 aa)).

It belongs to the PurH family.

It catalyses the reaction (6R)-10-formyltetrahydrofolate + 5-amino-1-(5-phospho-beta-D-ribosyl)imidazole-4-carboxamide = 5-formamido-1-(5-phospho-D-ribosyl)imidazole-4-carboxamide + (6S)-5,6,7,8-tetrahydrofolate. The enzyme catalyses IMP + H2O = 5-formamido-1-(5-phospho-D-ribosyl)imidazole-4-carboxamide. It functions in the pathway purine metabolism; IMP biosynthesis via de novo pathway; 5-formamido-1-(5-phospho-D-ribosyl)imidazole-4-carboxamide from 5-amino-1-(5-phospho-D-ribosyl)imidazole-4-carboxamide (10-formyl THF route): step 1/1. Its pathway is purine metabolism; IMP biosynthesis via de novo pathway; IMP from 5-formamido-1-(5-phospho-D-ribosyl)imidazole-4-carboxamide: step 1/1. The chain is Bifunctional purine biosynthesis protein PurH from Rhizobium etli (strain CIAT 652).